A 461-amino-acid chain; its full sequence is MKEFDTIAAVATPVGEGGISIIRISGDKSLDIVSSIFKGKNDRTLDDIKPYSMRYGFIIEKESKEMIDEVLVSYMKGPRSFTAEDTLEINCHGGVIPTKKILKELIKSGARLAEPGEFTKRAFLNGRIDLSQAEAVIDIIRSKTDLSMKSALKQAEGTLSKEINSIRNRMIKIIAHIEATVDYPEDDLEEITGQKIKVDLKEIINKIDNLISASEEGKILREGLNTVIVGKPNVGKSSLLNALINENKAIVTEIPGTTRDVIEEYINIDGIPTKIVDTAGIRETEDVVEKIGVEKSKEKIDEADLVIFMLDLSKKIDEEDIEIMDFIKNKKYIVLLNKLDLNKDLNEENHFIKELDSKYIIKTSVKNNSGLNELKECIKNLFFSGEIKSDELTVTNARHQEALIRSRESCIQAIETLSDEISIDLASIDIRNAWKYLGEITGDTLDENIIDKIFSEFCLGK.

The (6S)-5-formyl-5,6,7,8-tetrahydrofolate site is built by arginine 23, glutamate 88, and arginine 127. One can recognise a TrmE-type G domain in the interval 223-383 (GLNTVIVGKP…LKECIKNLFF (161 aa)). Asparagine 233 lines the K(+) pocket. Residues 233 to 238 (NVGKSS), 252 to 258 (TEIPGTT), and 277 to 280 (DTAG) contribute to the GTP site. Mg(2+) is bound at residue serine 237. Threonine 252, isoleucine 254, and threonine 257 together coordinate K(+). Threonine 258 is a binding site for Mg(2+). Lysine 461 serves as a coordination point for (6S)-5-formyl-5,6,7,8-tetrahydrofolate.

Belongs to the TRAFAC class TrmE-Era-EngA-EngB-Septin-like GTPase superfamily. TrmE GTPase family. As to quaternary structure, homodimer. Heterotetramer of two MnmE and two MnmG subunits. It depends on K(+) as a cofactor.

The protein resides in the cytoplasm. Exhibits a very high intrinsic GTPase hydrolysis rate. Involved in the addition of a carboxymethylaminomethyl (cmnm) group at the wobble position (U34) of certain tRNAs, forming tRNA-cmnm(5)s(2)U34. This chain is tRNA modification GTPase MnmE, found in Clostridium botulinum (strain Langeland / NCTC 10281 / Type F).